A 10624-amino-acid polypeptide reads, in one-letter code: Extracellular matrix-binding protein ebh (10624 aa).

Positions 1-39 are cleaved as a signal peptide; the sequence is MNYRDKIQKFSIRKYTVGTFSTVIATLVFLGFNTSQAHA. Residues 41-59 show a composition bias toward polar residues; the sequence is ETNQPASVVKQKQQSNNEQ. 4 disordered regions span residues 41 to 152, 250 to 277, 1347 to 1372, and 2418 to 2438; these read ETNQ…GNDN, PQRQ…PRSV, NEKA…NATT, and TITP…TLTA. The span at 65-78 shows a compositional bias: low complexity; sequence SQVQNSQNSQNSQS. Polar residues predominate over residues 79–117; the sequence is LSATHENEQPNNSQANLVNQKVAQSSTTNDEQPASQNVN. Positions 130–140 are enriched in basic and acidic residues; the sequence is PDKEESKHKQN. Polar residues-rich tracts occupy residues 141–151, 250–266, 1360–1372, and 2427–2438; these read ESQSANKNGND, PQRQ…QTRS, YRTT…NATT, and HSVSSNPSTLTA. 57 consecutive FIVAR domains span residues 2524-2580, 2610-2666, 2687-2750, 2780-2836, 2864-2919, 2947-3002, 3030-3085, 3154-3212, 3280-3339, 3407-3465, 3533-3591, 3659-3717, 3785-3843, 3911-3969, 4037-4095, 4163-4221, 4289-4347, 4415-4473, 4541-4599, 4667-4725, 4793-4851, 4919-4977, 5045-5103, 5171-5229, 5297-5355, 5423-5481, 5549-5607, 5675-5733, 5801-5859, 6053-6111, 6179-6236, 6304-6362, 6430-6488, 6556-6614, 6682-6740, 6808-6866, 6934-6992, 7060-7118, 7186-7244, 7312-7370, 7438-7496, 7564-7622, 7690-7748, 7816-7874, 7942-8000, 8068-8129, 8194-8252, 8320-8378, 8446-8503, 8571-8629, 8697-8755, 8823-8881, 8949-9007, 9075-9133, 9201-9255, 9323-9382, and 9577-9633; these read AKNH…VSDA, SKNN…ISDE, DTHA…VQSA, AKTK…IAAE, AKTQ…IRQN, AKNQ…INTN, AKTQ…INDK, AMTK…VNQK, AMTG…VNNA, AMGN…VNRA, AMGN…VTEA, AMNT…ITQK, AMAN…VEAA, AMGN…VEQA, AMGQ…VTAA, AMKG…ITQA, QMGN…VEAA, AMAN…VENA, AMGT…INQI, AMGQ…VDRA, AMNS…VDNA, AMGA…INDM, AMTA…VNSA, AMHS…VEQA, AMGQ…VERA, AMTA…VTNA, AMKG…INQA, AMTN…VETA, AMNQ…INQK, AMGN…VQAA, AMGQ…VEAA, AMQR…VEQA, AMDQ…VTAA, AMNQ…VTQA, AMER…VEAA, AMGN…VEAA, AMDK…INQA, AMTQ…ITAA, AMTQ…IQQA, AMTN…VEQA, AMTQ…VAQA, AMGT…VTKA, AMGN…ITRA, AMDQ…ITNE, AMEL…VNGA, AMHG…INQV, LMDA…VSSA, AMKA…IDQA, AMEA…VEQL, AMQA…VEQL, AMET…VEQA, SMDQ…VDQA, AMDQ…VIKL, and AMET…INGA. A helical membrane pass occupies residues 10430 to 10450; it reads IKNAIGVVGISGLLASFWFFI. The disordered stretch occupies residues 10527-10624; the sequence is RRKEDEEDVE…KKKKSKKNKK (98 aa). Composition is skewed to basic and acidic residues over residues 10542 to 10552 and 10591 to 10601; these read TDEKVLKDNEH and QKDNQSKDKKS. A compositionally biased stretch (basic residues) spans 10606–10624; that stretch reads TSKKVAAKKKKKKSKKNKK.

Its subcellular location is the cell membrane. The sequence is that of Extracellular matrix-binding protein ebh (ebh) from Staphylococcus aureus (strain JH1).